Reading from the N-terminus, the 693-residue chain is Endoprotease bli (693 aa).

Positions 1–20 (MYWQLVRILVLFDCLQKILA) are cleaved as a signal peptide. A propeptide spans 21–116 (IEHDSICIAD…EQRPRVRRKR (96 aa)) (inhibition peptide). Residue Asp161 coordinates Ca(2+). In terms of domain architecture, Peptidase S8 spans 167 to 482 (QWYLNNGAQG…YGLMDAGALV (316 aa)). Asn194 is a glycosylation site (N-linked (GlcNAc...) asparagine). Asp201 (charge relay system) is an active-site residue. A substrate-binding site is contributed by Asp202. The Ca(2+) site is built by Asp210, Asp222, Asp227, and Asp229. Residues 215 to 242 (YDPLASTDINGHDDDPTPQDDGDNKHGT) are disordered. 237–238 (DN) contributes to the substrate binding site. The active-site Charge relay system is His240. Ca(2+)-binding residues include Ile251, Asn254, Tyr256, and Gly258. Intrachain disulfides connect Cys257–Cys406 and Cys349–Cys379. Residues Glu282, 299 to 304 (SWGPED), Asp310, and 338 to 341 (ASGN) contribute to the substrate site. Residue Asp304 coordinates Ca(2+). Asp347 contributes to the Ca(2+) binding site. The substrate site is built by Asp352 and Tyr354. Glu377 is a Ca(2+) binding site. The active-site Charge relay system is Ser414. Ser414 serves as a coordination point for substrate. Asn433 and Asn518 each carry an N-linked (GlcNAc...) asparagine glycan. The P/Homo B domain occupies 490-628 (TVPEQHICTY…SLLLYGTAEP (139 aa)). Residues Cys497 and Cys526 are joined by a disulfide bond. Positions 629–693 (AQPNDPRHSS…LVSAQPELRV (65 aa)) are disordered. Positions 668-681 (DSRDWQPKKVENKK) are enriched in basic and acidic residues.

This sequence belongs to the peptidase S8 family. Furin subfamily. Ca(2+) is required as a cofactor. N-glycosylated. In terms of processing, the inhibition peptide, which plays the role of an intramolecular chaperone, is probably autocatalytically removed in the endoplasmic reticulum (ER) and remains non-covalently bound as a potent autoinhibitor. Probably following transport to the trans Golgi, a second cleavage within the inhibition propeptide results in propeptide dissociation and bli activation.

It localises to the secreted. The catalysed reaction is Release of mature proteins from their proproteins by cleavage of -Arg-Xaa-Yaa-Arg-|-Zaa- bonds, where Xaa can be any amino acid and Yaa is Arg or Lys. Releases albumin, complement component C3 and von Willebrand factor from their respective precursors.. With respect to regulation, inhibited by the propeptide before the second cleavage. Inhibited by ethylenediaminetetraacetic acid (EDTA), ZnSO(4) and chloroketone DEC-RVKR-CMK. Serine endoprotease which cleaves substrates at the RX(K/R)R consensus motif. This chain is Endoprotease bli, found in Onchocerca volvulus.